The primary structure comprises 547 residues: Ribosomal lysine N-methyltransferase set10 (547 aa).

The 219-residue stretch at 17–235 (KSVEFIQSRD…KGNQLFNNYG (219 aa)) folds into the SET domain. Tyr-234 serves as a coordination point for S-adenosyl-L-methionine.

The protein belongs to the class V-like SAM-binding methyltransferase superfamily. RKM1 family.

The protein resides in the cytoplasm. Its subcellular location is the nucleus. Functionally, S-adenosyl-L-methionine-dependent protein-lysine N-methyltransferase that methylates ribosomal protein L23 (rpl23a and rpl23b). The chain is Ribosomal lysine N-methyltransferase set10 (set10) from Schizosaccharomyces pombe (strain 972 / ATCC 24843) (Fission yeast).